Reading from the N-terminus, the 272-residue chain is MAAKVFESIGKFGLALAVAGGVVNSALYNVDAGHRAVIFDRFRGVQDIVVGEGTHFLIPWVQKPIIFDCRSRPRNVPVITGSKDLQNVNITLRILFRPVASQLPRIYTSIGEDYDERVLPSITTEILKSVVARFDAGELITQRELVSRQVSDDLTERAATFGLILDDVSLTHLTFGKEFTEAVEAKQVAQQEAERARFVVEKAEQQKKAAIISAEGDSKAAELIANSLATAGDGLIELRKLEAAEDIAYQLSRSRNITYLPAGQSVLLQLPQ.

N-acetylalanine is present on A2. T91 is subject to Phosphothreonine. N6-acetyllysine occurs at positions 128 and 186. Positions K177–I211 form a coiled coil. K202 bears the N6-acetyllysine; alternate mark. N6-succinyllysine; alternate is present on K202. The residue at position 249 (Y249) is a Phosphotyrosine.

The protein belongs to the prohibitin family. In terms of assembly, interacts with PHB2. Interacts with STOML2. Interacts with CD86 (via cytoplasmic domain); the interactions increases after priming with CD40. As to quaternary structure, (Microbial infection) Interacts with human enterovirus 71/EV-71 capsid protein VP0, protein 3CD and protease 3C. Widely expressed in different tissues.

The protein resides in the mitochondrion inner membrane. It is found in the nucleus. Its subcellular location is the cell membrane. The protein localises to the cytoplasm. Target of the anti-cancer drug Rocaglamide (Roc-A). In terms of biological role, protein with pleiotropic attributes mediated in a cell-compartment- and tissue-specific manner, which include the plasma membrane-associated cell signaling functions, mitochondrial chaperone, and transcriptional co-regulator of transcription factors in the nucleus. Plays a role in adipose tissue and glucose homeostasis in a sex-specific manner. Contributes to pulmonary vascular remodeling by accelerating proliferation of pulmonary arterial smooth muscle cells. Its function is as follows. In the mitochondria, together with PHB2, forms large ring complexes (prohibitin complexes) in the inner mitochondrial membrane (IMM) and functions as a chaperone protein that stabilizes mitochondrial respiratory enzymes and maintains mitochondrial integrity in the IMM, which is required for mitochondrial morphogenesis, neuronal survival, and normal lifespan. The prohibitin complex, with DNAJC19, regulates cardiolipin remodeling and the protein turnover of OMA1 in a cardiolipin-binding manner. Regulates mitochondrial respiration activity playing a role in cellular aging. The prohibitin complex plays a role of mitophagy receptor involved in targeting mitochondria for autophagic degradation. Involved in mitochondrial-mediated antiviral innate immunity, activates RIG-I-mediated signal transduction and production of IFNB1 and pro-inflammatory cytokine IL6. In the nucleus, acts as a transcription coregulator, enhances promoter binding by TP53, a transcription factor it activates, but reduces the promoter binding by E2F1, a transcription factor it represses. Interacts with STAT3 to affect IL17 secretion in T-helper Th17 cells. Functionally, in the plasma membrane, cooperates with CD86 to mediate CD86-signaling in B lymphocytes that regulates the level of IgG1 produced through the activation of distal signaling intermediates. Upon CD40 engagement, required to activate NF-kappa-B signaling pathway via phospholipase C and protein kinase C activation. In terms of biological role, (Microbial infection) In neuronal cells, cell surface-expressed PHB1 is involved in human enterovirus 71/EV-71 entry into neuronal cells specifically, while membrane-bound mitochondrial PHB1 associates with the virus replication complex and facilitates viral replication. May serve as a receptor for EV71. In Mus musculus (Mouse), this protein is Prohibitin 1 (Phb1).